The following is a 210-amino-acid chain: Thiamine-phosphate synthase (210 aa).

Residues 38-42 (QFREK) and N70 contribute to the 4-amino-2-methyl-5-(diphosphooxymethyl)pyrimidine site. Positions 71 and 90 each coordinate Mg(2+). S107 serves as a coordination point for 4-amino-2-methyl-5-(diphosphooxymethyl)pyrimidine. Residue 132–134 (TKT) participates in 2-[(2R,5Z)-2-carboxy-4-methylthiazol-5(2H)-ylidene]ethyl phosphate binding. 4-amino-2-methyl-5-(diphosphooxymethyl)pyrimidine is bound at residue K135. Residue 183–184 (IS) participates in 2-[(2R,5Z)-2-carboxy-4-methylthiazol-5(2H)-ylidene]ethyl phosphate binding.

Belongs to the thiamine-phosphate synthase family. Requires Mg(2+) as cofactor.

It catalyses the reaction 2-[(2R,5Z)-2-carboxy-4-methylthiazol-5(2H)-ylidene]ethyl phosphate + 4-amino-2-methyl-5-(diphosphooxymethyl)pyrimidine + 2 H(+) = thiamine phosphate + CO2 + diphosphate. The enzyme catalyses 2-(2-carboxy-4-methylthiazol-5-yl)ethyl phosphate + 4-amino-2-methyl-5-(diphosphooxymethyl)pyrimidine + 2 H(+) = thiamine phosphate + CO2 + diphosphate. The catalysed reaction is 4-methyl-5-(2-phosphooxyethyl)-thiazole + 4-amino-2-methyl-5-(diphosphooxymethyl)pyrimidine + H(+) = thiamine phosphate + diphosphate. Its pathway is cofactor biosynthesis; thiamine diphosphate biosynthesis; thiamine phosphate from 4-amino-2-methyl-5-diphosphomethylpyrimidine and 4-methyl-5-(2-phosphoethyl)-thiazole: step 1/1. In terms of biological role, condenses 4-methyl-5-(beta-hydroxyethyl)thiazole monophosphate (THZ-P) and 2-methyl-4-amino-5-hydroxymethyl pyrimidine pyrophosphate (HMP-PP) to form thiamine monophosphate (TMP). The polypeptide is Thiamine-phosphate synthase (Archaeoglobus fulgidus (strain ATCC 49558 / DSM 4304 / JCM 9628 / NBRC 100126 / VC-16)).